Consider the following 228-residue polypeptide: Cutinase (228 aa).

Residues 1 to 16 form the signal peptide; that stretch reads MKFLSIISLAVSLVAA. An intrachain disulfide couples Cys-49 to Cys-129. Ser-140 functions as the Nucleophile in the catalytic mechanism. A disulfide bond links Cys-191 and Cys-198. The active site involves Asp-195. His-208 acts as the Proton donor/acceptor in catalysis.

The protein belongs to the cutinase family. Post-translationally, the 2 disulfide bonds play a critical role in holding the catalytic residues in juxta-position; reduction of the disulfide bridges results in the complete inactivation of the enzyme.

Its subcellular location is the secreted. It carries out the reaction cutin + H2O = cutin monomers.. Partially inhibited by berberine; higher inhibitory effects are observed with longer chain polyester substrates. Catalyzes the hydrolysis of complex carboxylic polyesters found in the cell wall of plants. Degrades cutin, a macromolecule that forms the structure of the plant cuticle. Allows pathogenic fungi to penetrate through the cuticular barrier into the host plant during the initial stage of fungal infection. This Colletotrichum truncatum (Anthracnose fungus) protein is Cutinase (CUTA).